The sequence spans 625 residues: Glucose dehydrogenase [FAD, quinone] (625 aa).

The N-terminal stretch at 1-42 is a signal peptide; sequence MSASASACDCLVGVPTGPTLASTCGGSAFMLFMGLLEVFIRS. 66-95 lines the FAD pocket; that stretch reads DFIVIGGGSAGSVVASRLSEVPQWKVLLIE. Residue His-544 is the Proton acceptor of the active site. Residue Sec-613 is a non-standard amino acid, selenocysteine.

Belongs to the GMC oxidoreductase family. FAD serves as cofactor.

The protein resides in the secreted. It carries out the reaction a quinone + D-glucose = D-glucono-1,5-lactone + a quinol. In terms of biological role, essential for cuticular modification during development. The chain is Glucose dehydrogenase [FAD, quinone] (Gld) from Drosophila melanogaster (Fruit fly).